Here is a 286-residue protein sequence, read N- to C-terminus: Expansin-like protein 1 (286 aa).

The signal sequence occupies residues 1–21 (MKTFVLFVILLCLTFLSISKS). The Extracellular segment spans residues 22–265 (ETCPFSQSLV…TGASIGTPSD (244 aa)). Residues 44–145 (AGNCGYENLM…YKVPCGVNGN (102 aa)) form the Expansin-like EG45 domain. Intrachain disulfides connect Cys-47–Cys-77 and Cys-80–Cys-140. 2 N-linked (GlcNAc...) asparagine glycosylation sites follow: Asn-82 and Asn-89. The helical transmembrane segment at 266-286 (ASSLTLYALFSLTILFLVMLN) threads the bilayer.

This sequence belongs to the expansin family. Expansin A subfamily.

The protein resides in the membrane. In terms of biological role, may serve to lubricate the movement of the cellulose microfibrils during cell growth and wall extension and/or they may serve to maintain the fluid state of the slug cell wall. The polypeptide is Expansin-like protein 1 (expl1) (Dictyostelium discoideum (Social amoeba)).